A 36-amino-acid chain; its full sequence is SPLEPVYPGDNATPEEMAQYAAELRRYINMLTRPRY.

Tyrosine amide is present on Tyr-36.

This sequence belongs to the NPY family.

It localises to the secreted. Its function is as follows. Hormone secreted by pancreatic cells that acts as a regulator of pancreatic and gastrointestinal functions probably by signaling through the G protein-coupled receptor NPY4R2. The chain is Pancreatic polypeptide (PPY) from Ceratotherium simum (White rhinoceros).